A 302-amino-acid polypeptide reads, in one-letter code: Putative beta-glucosidase 17 (302 aa).

Positions 1–27 (MMAVAAATRIAVVVVAALAALAPGARG) are cleaved as a signal peptide. A beta-D-glucoside-binding positions include glutamine 47, histidine 149, and 194–195 (NE). Glutamate 195 functions as the Proton donor in the catalytic mechanism. Cysteine 214 and cysteine 221 are joined by a disulfide. N-linked (GlcNAc...) asparagine glycosylation is present at asparagine 274.

It belongs to the glycosyl hydrolase 1 family.

The enzyme catalyses Hydrolysis of terminal, non-reducing beta-D-glucosyl residues with release of beta-D-glucose.. The chain is Putative beta-glucosidase 17 (BGLU17) from Oryza sativa subsp. japonica (Rice).